Here is a 304-residue protein sequence, read N- to C-terminus: uncharacterized protein (304 aa).

Residues 1–10 (MLWAHRKKRK) are compositionally biased toward basic residues. Residues 1–28 (MLWAHRKKRKAATETTEDKPLESHRAND) are disordered. The segment covering 16–27 (TEDKPLESHRAN) has biased composition (basic and acidic residues). S39 bears the Phosphoserine mark. The span at 91–101 (KQKISGSSMTK) shows a compositional bias: polar residues. 3 disordered regions span residues 91–115 (KQKISGSSMTKEMQRESGKSPSMED), 138–160 (SMLQRSTTHRRKGHAESRNISPE), and 190–304 (SHTV…IYGS). Residues 151–160 (HAESRNISPE) show a composition bias toward basic and acidic residues. S158 carries the post-translational modification Phosphoserine. A compositionally biased stretch (low complexity) spans 195–206 (SQSRHSNQSHHS). Polar residues predominate over residues 208–223 (PSHQSNQSHPVYSSYQ). A compositionally biased stretch (low complexity) spans 229–248 (HLSPQSYPSYSSHQSHPGHS). The span at 249–263 (NHQGHSGLSSHQTHL) shows a compositional bias: polar residues. The segment covering 264 to 292 (GHSNHQGHPGHSSHQSHQGQPGHPSHQSH) has biased composition (low complexity).

This is an uncharacterized protein from Mus musculus (Mouse).